The following is a 360-amino-acid chain: Chorismate synthase (360 aa).

Arg-47 contributes to the NADP(+) binding site. Residues Arg-124 to Ser-126, Asn-240 to Ala-241, Gly-285, Lys-300 to Thr-304, and Arg-326 contribute to the FMN site.

It belongs to the chorismate synthase family. Homotetramer. FMNH2 serves as cofactor.

The enzyme catalyses 5-O-(1-carboxyvinyl)-3-phosphoshikimate = chorismate + phosphate. It functions in the pathway metabolic intermediate biosynthesis; chorismate biosynthesis; chorismate from D-erythrose 4-phosphate and phosphoenolpyruvate: step 7/7. Functionally, catalyzes the anti-1,4-elimination of the C-3 phosphate and the C-6 proR hydrogen from 5-enolpyruvylshikimate-3-phosphate (EPSP) to yield chorismate, which is the branch point compound that serves as the starting substrate for the three terminal pathways of aromatic amino acid biosynthesis. This reaction introduces a second double bond into the aromatic ring system. The sequence is that of Chorismate synthase from Cytophaga hutchinsonii (strain ATCC 33406 / DSM 1761 / CIP 103989 / NBRC 15051 / NCIMB 9469 / D465).